We begin with the raw amino-acid sequence, 345 residues long: Holliday junction branch migration complex subunit RuvB (345 aa).

Residues 1–182 (MQRLVEVESV…FGMHFRMQFY (182 aa)) are large ATPase domain (RuvB-L). ATP contacts are provided by residues L21, R22, G63, K66, T67, T68, 129 to 131 (EDY), R172, Y182, and R219. Position 67 (T67) interacts with Mg(2+). The segment at 183 to 253 (TEIELAKIIQ…RCKYALDELG (71 aa)) is small ATPAse domain (RuvB-S). The interval 256 to 345 (ESGFDEMDIN…EDDLTQGKLF (90 aa)) is head domain (RuvB-H). The DNA site is built by R310 and R315.

It belongs to the RuvB family. In terms of assembly, homohexamer. Forms an RuvA(8)-RuvB(12)-Holliday junction (HJ) complex. HJ DNA is sandwiched between 2 RuvA tetramers; dsDNA enters through RuvA and exits via RuvB. An RuvB hexamer assembles on each DNA strand where it exits the tetramer. Each RuvB hexamer is contacted by two RuvA subunits (via domain III) on 2 adjacent RuvB subunits; this complex drives branch migration. In the full resolvosome a probable DNA-RuvA(4)-RuvB(12)-RuvC(2) complex forms which resolves the HJ.

The protein localises to the cytoplasm. It carries out the reaction ATP + H2O = ADP + phosphate + H(+). Functionally, the RuvA-RuvB-RuvC complex processes Holliday junction (HJ) DNA during genetic recombination and DNA repair, while the RuvA-RuvB complex plays an important role in the rescue of blocked DNA replication forks via replication fork reversal (RFR). RuvA specifically binds to HJ cruciform DNA, conferring on it an open structure. The RuvB hexamer acts as an ATP-dependent pump, pulling dsDNA into and through the RuvAB complex. RuvB forms 2 homohexamers on either side of HJ DNA bound by 1 or 2 RuvA tetramers; 4 subunits per hexamer contact DNA at a time. Coordinated motions by a converter formed by DNA-disengaged RuvB subunits stimulates ATP hydrolysis and nucleotide exchange. Immobilization of the converter enables RuvB to convert the ATP-contained energy into a lever motion, pulling 2 nucleotides of DNA out of the RuvA tetramer per ATP hydrolyzed, thus driving DNA branch migration. The RuvB motors rotate together with the DNA substrate, which together with the progressing nucleotide cycle form the mechanistic basis for DNA recombination by continuous HJ branch migration. Branch migration allows RuvC to scan DNA until it finds its consensus sequence, where it cleaves and resolves cruciform DNA. In Aliarcobacter butzleri (strain RM4018) (Arcobacter butzleri), this protein is Holliday junction branch migration complex subunit RuvB.